The primary structure comprises 392 residues: Small ribosomal subunit protein uS9m (392 aa).

Over residues 8–25 (RSSRAMSSASPASASDSD) the composition is skewed to low complexity. The tract at residues 8–27 (RSSRAMSSASPASASDSDTS) is disordered.

This sequence belongs to the universal ribosomal protein uS9 family. As to quaternary structure, component of the mitochondrial ribosome small subunit (28S) which comprises a 12S rRNA and about 30 distinct proteins.

Its subcellular location is the mitochondrion. This Caenorhabditis elegans protein is Small ribosomal subunit protein uS9m (mrps-9).